Consider the following 825-residue polypeptide: Cytosolic phospholipase A2 delta (825 aa).

Residues Ser-14–Phe-133 enclose the C2 domain. Residues Asp-47, Asp-53, Asp-103, Asp-105, and Asp-111 each contribute to the Ca(2+) site. Residues Asp-281–Thr-825 enclose the PLA2c domain. Gly-339 to Gly-340 provides a ligand contact to substrate. The active-site Nucleophile is Ser-370. The active-site Proton acceptor is Asp-654.

It depends on Ca(2+) as a cofactor. Weakly or not expressed in most tissues. Detected in placenta of 17.5 dpc embryos.

Its subcellular location is the cytoplasm. The protein resides in the cytosol. It is found in the membrane. It carries out the reaction a 1,2-diacyl-sn-glycero-3-phosphocholine + H2O = a 1-acyl-sn-glycero-3-phosphocholine + a fatty acid + H(+). It catalyses the reaction 1-hexadecanoyl-2-(5Z,8Z,11Z,14Z-eicosatetraenoyl)-sn-glycero-3-phosphocholine + H2O = 1-hexadecanoyl-sn-glycero-3-phosphocholine + (5Z,8Z,11Z,14Z)-eicosatetraenoate + H(+). The catalysed reaction is 1-hexadecanoyl-2-(9Z,12Z-octadecadienoyl)-sn-glycero-3-phosphocholine + H2O = (9Z,12Z)-octadecadienoate + 1-hexadecanoyl-sn-glycero-3-phosphocholine + H(+). The enzyme catalyses 1-hexadecanoyl-2-(9Z-octadecenoyl)-sn-glycero-3-phosphocholine + H2O = 1-hexadecanoyl-sn-glycero-3-phosphocholine + (9Z)-octadecenoate + H(+). It carries out the reaction 1-hexadecanoyl-2-(5Z,8Z,11Z,14Z-eicosatetraenoyl)-sn-glycero-3-phosphoethanolamine + H2O = 1-hexadecanoyl-sn-glycero-3-phosphoethanolamine + (5Z,8Z,11Z,14Z)-eicosatetraenoate + H(+). It catalyses the reaction 1-hexadecanoyl-2-(9Z,12Z-octadecadienoyl)-sn-glycero-3-phosphoethanolamine + H2O = 1-hexadecanoyl-sn-glycero-3-phosphoethanolamine + (9Z,12Z)-octadecadienoate + H(+). The catalysed reaction is 1-hexadecanoyl-sn-glycero-3-phosphocholine + H2O = sn-glycerol 3-phosphocholine + hexadecanoate + H(+). Its pathway is lipid metabolism; fatty acid metabolism. Its activity is regulated as follows. Stimulated by cytosolic Ca(2+). Calcium-dependent phospholipase A2 that selectively hydrolyzes glycerophospholipids in the sn-2 position. Compared to its human ortholog, may have no preference for the fatty acid found at the sn-2 position. The chain is Cytosolic phospholipase A2 delta from Mus musculus (Mouse).